The primary structure comprises 57 residues: Potassium channel toxin alpha-KTx 8.5 (57 aa).

The N-terminal stretch at 1 to 28 (MSRLYAIILIALVLNVIMTIMPDSKVEA) is a signal peptide. 3 cysteine pairs are disulfide-bonded: C31-C47, C34-C52, and C38-C54.

This sequence belongs to the short scorpion toxin superfamily. Potassium channel inhibitor family. Alpha-KTx 08 subfamily. In terms of tissue distribution, expressed by the venom gland.

The protein resides in the secreted. Selectively inhibits voltage-gated potassium channels Kv1.2/KCNA2 (IC(50)=183 nM). The chain is Potassium channel toxin alpha-KTx 8.5 from Odontobuthus doriae (Yellow Iranian scorpion).